The sequence spans 323 residues: MTKPAKIGVLLANLGTPDSPTPKSISRYLWQFLTDPRVVDLPRCKWYPLLKAIILPLRSKRIAKNYQAIWTEQGSPLLAISRQQKDALQAYLDNQNIDTQVEIAMTYGNPSMQSAVKNLLKNQVERIIVLPLYPQYSSSTTGAVFDAFANALKEERGLLPFDFIHSYHIDENYINALADSIKVRLKSDEFLLFSYHGIPLRYEKMGDYYREHCKQTTIAVVNKLGLTENQWRMTFQSRFGREEWLQPYTDKFLESAAAQNIQKIAVICPGFSVDCLETIEEIDEENRENFLNNGGQSYQYIPALNVEHAHIEMMGKLILEKLT.

Positions 196 and 277 each coordinate Fe cation.

The protein belongs to the ferrochelatase family.

Its subcellular location is the cytoplasm. The enzyme catalyses heme b + 2 H(+) = protoporphyrin IX + Fe(2+). Its pathway is porphyrin-containing compound metabolism; protoheme biosynthesis; protoheme from protoporphyrin-IX: step 1/1. Its function is as follows. Catalyzes the ferrous insertion into protoporphyrin IX. The sequence is that of Ferrochelatase from Haemophilus influenzae (strain ATCC 51907 / DSM 11121 / KW20 / Rd).